The primary structure comprises 522 residues: Protein nucleotidyltransferase YdiU (522 aa).

Residues Gly109, Gly111, Arg112, Lys132, Asp144, Gly145, Arg195, and Arg202 each contribute to the ATP site. Residue Asp271 is the Proton acceptor of the active site. Asn272 and Asp281 together coordinate Mg(2+). ATP is bound at residue Asp281.

Belongs to the SELO family. Mg(2+) serves as cofactor. The cofactor is Mn(2+).

The catalysed reaction is L-seryl-[protein] + ATP = 3-O-(5'-adenylyl)-L-seryl-[protein] + diphosphate. It carries out the reaction L-threonyl-[protein] + ATP = 3-O-(5'-adenylyl)-L-threonyl-[protein] + diphosphate. It catalyses the reaction L-tyrosyl-[protein] + ATP = O-(5'-adenylyl)-L-tyrosyl-[protein] + diphosphate. The enzyme catalyses L-histidyl-[protein] + UTP = N(tele)-(5'-uridylyl)-L-histidyl-[protein] + diphosphate. The catalysed reaction is L-seryl-[protein] + UTP = O-(5'-uridylyl)-L-seryl-[protein] + diphosphate. It carries out the reaction L-tyrosyl-[protein] + UTP = O-(5'-uridylyl)-L-tyrosyl-[protein] + diphosphate. In terms of biological role, nucleotidyltransferase involved in the post-translational modification of proteins. It can catalyze the addition of adenosine monophosphate (AMP) or uridine monophosphate (UMP) to a protein, resulting in modifications known as AMPylation and UMPylation. In Burkholderia ambifaria (strain ATCC BAA-244 / DSM 16087 / CCUG 44356 / LMG 19182 / AMMD) (Burkholderia cepacia (strain AMMD)), this protein is Protein nucleotidyltransferase YdiU.